The sequence spans 125 residues: Large ribosomal subunit protein bL12 (125 aa).

It belongs to the bacterial ribosomal protein bL12 family. As to quaternary structure, homodimer. Part of the ribosomal stalk of the 50S ribosomal subunit. Forms a multimeric L10(L12)X complex, where L10 forms an elongated spine to which 2 to 4 L12 dimers bind in a sequential fashion. Binds GTP-bound translation factors.

In terms of biological role, forms part of the ribosomal stalk which helps the ribosome interact with GTP-bound translation factors. Is thus essential for accurate translation. The protein is Large ribosomal subunit protein bL12 of Afipia carboxidovorans (strain ATCC 49405 / DSM 1227 / KCTC 32145 / OM5) (Oligotropha carboxidovorans).